A 305-amino-acid polypeptide reads, in one-letter code: Probable cell division protein WhiA (305 aa).

Positions 269-302 (TIKELGELLEPSLGKSGVNHRLRKLVEQANELRK) form a DNA-binding region, H-T-H motif.

This sequence belongs to the WhiA family.

Its function is as follows. Involved in cell division and chromosome segregation. This chain is Probable cell division protein WhiA, found in Lactococcus lactis subsp. lactis (strain IL1403) (Streptococcus lactis).